Consider the following 484-residue polypeptide: Trigger factor (484 aa).

In terms of domain architecture, PPIase FKBP-type spans 162–243 (GDFISIDLSA…VKSVKERELP (82 aa)). Residues 427-484 (DGNTIDTSEFFGKPPENDVTDLLDDDADGDAGVDADGDTENSAEPADADSADTAQGAG) form a disordered region. Residues 444-476 (DVTDLLDDDADGDAGVDADGDTENSAEPADADS) are compositionally biased toward acidic residues.

Belongs to the FKBP-type PPIase family. Tig subfamily.

Its subcellular location is the cytoplasm. The enzyme catalyses [protein]-peptidylproline (omega=180) = [protein]-peptidylproline (omega=0). Involved in protein export. Acts as a chaperone by maintaining the newly synthesized protein in an open conformation. Functions as a peptidyl-prolyl cis-trans isomerase. This Mycobacterium ulcerans (strain Agy99) protein is Trigger factor.